The primary structure comprises 66 residues: U-limacoditoxin(59)-Dv128 (66 aa).

An N-terminal signal peptide occupies residues 1–20 (MRHLLVLLLICLSVIAMAQA). Positions 21–66 (TFGGGLGGAVGGRRRRDIGGGLGGAVGGRRRRDIGGGLGGAVGGKS) are 3 X 16 AA tandem repeats of [FI]-G-G-G-L-G-G-A-V-G-G-R-R-R-R-D. 2 consecutive repeat copies span residues 22–37 (FGGG…RRRD) and 38–53 (IGGG…RRRD). Gly31 bears the Glycine amide mark. Positions 33 to 37 (RRRRD) are excised as a propeptide. Gly47 carries the glycine amide modification. A propeptide spanning residues 49 to 53 (RRRRD) is cleaved from the precursor. A 3; half-length repeat occupies 54-64 (IGGGLGGAVGG).

This sequence belongs to the limacoditoxin-59 family. In terms of tissue distribution, expressed by the venom secretory cell of the spine. The spine is a cuticular structure containing a single large nucleated venom-secreting cell at its base. It is an independent unit capable of producing, storing and injecting venom. On the back of D.vulnerans caterpillars, spines are grouped together by 50 to 100 to form scoli, of which there are eight in D.vulnerans.

The protein resides in the secreted. In terms of biological role, probable toxin. In Doratifera vulnerans (Mottled cup moth), this protein is U-limacoditoxin(59)-Dv128.